A 125-amino-acid chain; its full sequence is Protein ApaG (125 aa).

The region spanning 1–125 is the ApaG domain; sequence MINSPRVCVQ…FRLAIPSLIN (125 aa).

This chain is Protein ApaG, found in Sodalis glossinidius (strain morsitans).